We begin with the raw amino-acid sequence, 351 residues long: Photosystem II D2 protein 2 (351 aa).

Residues 39–59 traverse the membrane as a helical segment; that stretch reads CAFLSIGGWFTGTTFVTSWYT. His116 contacts chlorophyll a. A helical membrane pass occupies residues 123–139; it reads GFMLRQFEIARLVNVRP. 2 residues coordinate pheophytin a: Gln128 and Asn141. The chain crosses the membrane as a helical span at residues 151-164; it reads VFVSVFLMYPLGQS. A chlorophyll a-binding site is contributed by His196. A helical membrane pass occupies residues 206-226; it reads GALLCAIHGATVENTLFEDTK. 2 residues coordinate a plastoquinone: His213 and Phe260. Fe cation is bound at residue His213. Residue His267 participates in Fe cation binding. Residues 277-293 traverse the membrane as a helical segment; that stretch reads GLWASAIGLVGIALNMR.

This sequence belongs to the reaction center PufL/M/PsbA/D family. In terms of assembly, PSII is composed of 1 copy each of membrane proteins PsbA, PsbB, PsbC, PsbD, PsbE, PsbF, PsbH, PsbI, PsbJ, PsbK, PsbL, PsbM, PsbT, PsbX, PsbY, PsbZ, Psb30/Ycf12, peripheral proteins PsbO, CyanoQ (PsbQ), PsbU, PsbV and a large number of cofactors. It forms dimeric complexes. The cofactor is The D1/D2 heterodimer binds P680, chlorophylls that are the primary electron donor of PSII, and subsequent electron acceptors. It shares a non-heme iron and each subunit binds pheophytin, quinone, additional chlorophylls, carotenoids and lipids. There is also a Cl(-1) ion associated with D1 and D2, which is required for oxygen evolution. The PSII complex binds additional chlorophylls, carotenoids and specific lipids..

The protein resides in the cellular thylakoid membrane. It catalyses the reaction 2 a plastoquinone + 4 hnu + 2 H2O = 2 a plastoquinol + O2. Its function is as follows. Photosystem II (PSII) is a light-driven water:plastoquinone oxidoreductase that uses light energy to abstract electrons from H(2)O, generating O(2) and a proton gradient subsequently used for ATP formation. It consists of a core antenna complex that captures photons, and an electron transfer chain that converts photonic excitation into a charge separation. The D1/D2 (PsbA/PsbD) reaction center heterodimer binds P680, the primary electron donor of PSII as well as several subsequent electron acceptors. D2 is needed for assembly of a stable PSII complex. This chain is Photosystem II D2 protein 2, found in Acaryochloris marina (strain MBIC 11017).